We begin with the raw amino-acid sequence, 574 residues long: Efflux pump FUB11 (574 aa).

Residues 1-44 (MAIDPQPSSPSLSSETIANDTIGNDNNVNEPSVEPKTQEHQHTV) are disordered. A compositionally biased stretch (polar residues) spans 9-30 (SPSLSSETIANDTIGNDNNVNE). N-linked (GlcNAc...) asparagine glycosylation is present at Asn-19. 11 helical membrane passes run 116–136 (VATLGISLYVLGFTFGPLIWA), 148–168 (FFFTFMVATAFSAGAAGAGSI), 176–196 (FLTGSIGSAPLSNAPALIADM), 208–228 (MFSGAPFLGPAIGPIAGGFLG), 235–255 (WLHGLMAAFTGVTWIACTVFI), 318–338 (IYISIIYGTMYMCFAAFPIVF), 348–368 (IGGLAFTGIVIGVILSIISFA), 394–414 (AIMGSLLIPIGLFWFAWTTFA), 419–439 (IVPIIGTVFFAWGLVLVFMAL), 449–469 (IFAASIMAANSALRSLFGAAF), and 484–504 (WASSIPAFLALACVPFPFLFY). The interval 552–574 (HNSHTSATHSHGHRRSLSCTRSV) is disordered.

This sequence belongs to the major facilitator superfamily. DHA1 family. Polyamines/proton antiporter (TC 2.A.1.2.16) subfamily.

The protein localises to the cell membrane. In terms of biological role, efflux pump involved in export of fusaric acid, a mycotoxin with low to moderate toxicity to animals and humans, but with high phytotoxic properties. Constitutes a self-protecting mechanism of the fungus against critical levels of fusaric acid within the cell. The sequence is that of Efflux pump FUB11 from Gibberella fujikuroi (strain CBS 195.34 / IMI 58289 / NRRL A-6831) (Bakanae and foot rot disease fungus).